A 226-amino-acid chain; its full sequence is UPF0758 protein SPs0978 (226 aa).

Residues 103–225 (SVLTSVQVAE…YYSFREKSTL (123 aa)) enclose the MPN domain. Zn(2+) contacts are provided by His-174, His-176, and Asp-187. The short motif at 174 to 187 (HNHPSGNIEPSSND) is the JAMM motif element.

It belongs to the UPF0758 family.

This is UPF0758 protein SPs0978 from Streptococcus pyogenes serotype M3 (strain SSI-1).